The following is a 591-amino-acid chain: Transcriptional regulator PUL4 (591 aa).

Residues 3 to 29 (CLECKKRKQKCDGQKPCRRCTKLNVKC) constitute a DNA-binding region (zn(2)-C6 fungal-type).

Its subcellular location is the nucleus. In terms of biological role, transcription factor involved in regulation of the PUL gene cluster that mediates the formation of pulcherrimin, a red iron-containing pigment composed of two cyclized and modified leucine molecules that acts as a siderophore, a chelator that binds iron outside the cell for subsequent uptake. This is Transcriptional regulator PUL4 from Kluyveromyces lactis (strain ATCC 8585 / CBS 2359 / DSM 70799 / NBRC 1267 / NRRL Y-1140 / WM37) (Yeast).